Consider the following 380-residue polypeptide: Peroxisomal membrane protein PEX13 (380 aa).

Positions 1–30 (MSDSSAPDLPSKPSSLNAGQSSSLQTTNTG) are disordered. Topologically, residues 1–230 (MSDSSAPDLP…NKNTNKLSLK (230 aa)) are lumenal. The segment covering 12–30 (KPSSLNAGQSSSLQTTNTG) has biased composition (polar residues). Residues 231–251 (PLLLFLAAVVGFPYLLKKLIA) form a helical membrane-spanning segment. The Cytoplasmic segment spans residues 252–380 (HLAETSQMNG…DSTEFQKMKT (129 aa)). The SH3 domain maps to 277-344 (TKLEFARALY…PYNYVEIIER (68 aa)).

Belongs to the peroxin-13 family. Interacts (via SH3 domain) with PEX14 (via SH3-binding motif); forming the PEX13-PEX14 docking complex.

The protein localises to the peroxisome membrane. Functionally, component of the PEX13-PEX14 docking complex, a translocon channel that specifically mediates the import of peroxisomal cargo proteins bound to PEX5 receptor. The PEX13-PEX14 docking complex forms a large import pore which can be opened to a diameter of about 9 nm. Mechanistically, PEX5 receptor along with cargo proteins associates with the PEX14 subunit of the PEX13-PEX14 docking complex in the cytosol, leading to the insertion of the receptor into the organelle membrane with the concomitant translocation of the cargo into the peroxisome matrix. The polypeptide is Peroxisomal membrane protein PEX13 (PEX13) (Komagataella pastoris (Yeast)).